The chain runs to 240 residues: Orotidine 5'-phosphate decarboxylase (240 aa).

Residues Asp-16, Lys-37, 64–73, Thr-128, Arg-190, Gln-199, Gly-219, and Arg-220 each bind substrate; that span reads DLKFHDIPTT. Residue Lys-66 is the Proton donor of the active site.

This sequence belongs to the OMP decarboxylase family. Type 1 subfamily. As to quaternary structure, homodimer.

The catalysed reaction is orotidine 5'-phosphate + H(+) = UMP + CO2. It functions in the pathway pyrimidine metabolism; UMP biosynthesis via de novo pathway; UMP from orotate: step 2/2. Its function is as follows. Catalyzes the decarboxylation of orotidine 5'-monophosphate (OMP) to uridine 5'-monophosphate (UMP). This chain is Orotidine 5'-phosphate decarboxylase, found in Prochlorococcus marinus (strain SARG / CCMP1375 / SS120).